The sequence spans 141 residues: Nucleoside diphosphate kinase (141 aa).

6 residues coordinate ATP: K11, F59, R87, T93, R104, and N114. The Pros-phosphohistidine intermediate role is filled by H117.

Belongs to the NDK family. As to quaternary structure, homotetramer. The cofactor is Mg(2+).

It is found in the cytoplasm. The enzyme catalyses a 2'-deoxyribonucleoside 5'-diphosphate + ATP = a 2'-deoxyribonucleoside 5'-triphosphate + ADP. The catalysed reaction is a ribonucleoside 5'-diphosphate + ATP = a ribonucleoside 5'-triphosphate + ADP. Its function is as follows. Major role in the synthesis of nucleoside triphosphates other than ATP. The ATP gamma phosphate is transferred to the NDP beta phosphate via a ping-pong mechanism, using a phosphorylated active-site intermediate. The polypeptide is Nucleoside diphosphate kinase (Vibrio campbellii (strain ATCC BAA-1116)).